The sequence spans 94 residues: Ig kappa-B5 chain V region 2699 (94 aa).

The segment at 1–23 (AFELTQTPSSVEAAVGGTVTINC) is framework-1. Residues 24–34 (QASTDISSNLA) are complementarity-determining-1. A framework-2 region spans residues 35 to 49 (WYTPKPGSPPKLLIY). Residues 50-56 (SASTLAS) form a complementarity-determining-2 region. Residues 57–82 (GVSSRFKGSGSGVLITLTISDLECGV) are framework-3. Position 83 (Ser-83) is a region of interest, complementarity-determining-3. A framework-4 region spans residues 84–93 (FGGGTKVVVE).

The polypeptide is Ig kappa-B5 chain V region 2699 (Oryctolagus cuniculus (Rabbit)).